The sequence spans 205 residues: Adenylyl-sulfate kinase (205 aa).

31–38 is an ATP binding site; the sequence is GLSGAGKS. S105 (phosphoserine intermediate) is an active-site residue.

The protein belongs to the APS kinase family.

The enzyme catalyses adenosine 5'-phosphosulfate + ATP = 3'-phosphoadenylyl sulfate + ADP + H(+). It participates in sulfur metabolism; hydrogen sulfide biosynthesis; sulfite from sulfate: step 2/3. In terms of biological role, catalyzes the synthesis of activated sulfate. The protein is Adenylyl-sulfate kinase of Shewanella baltica (strain OS195).